Consider the following 166-residue polypeptide: Nicotine metabolites export pump subunit NepB (166 aa).

4 helical membrane-spanning segments follow: residues 51 to 71, 77 to 97, 108 to 128, and 133 to 153; these read LHAWLYLGSAITTEVTGTVIL, FQLPAQTTAAMALYAFSFFLL, VAYATWSGLGTVAVAFAGAII, and VTLGRITAITAVIGGIVILNL.

The protein belongs to the drug/metabolite transporter (DMT) superfamily. Small multidrug resistance (SMR) (TC 2.A.7.1) family. NepA/NepB subfamily. In terms of assembly, the efflux pump is composed of NepA and NepB.

It localises to the cell membrane. In terms of biological role, component of an efflux pump responsible for the transport of nicotine breakdown products, in particular methylamine, out of the cell. This pump apparently serves as a metabolic valve for nicotine catabolites and may protect the bacteria from the potentially toxic side effects of these compounds. The polypeptide is Nicotine metabolites export pump subunit NepB (nepB) (Paenarthrobacter nicotinovorans (Arthrobacter nicotinovorans)).